A 447-amino-acid polypeptide reads, in one-letter code: Tubulin beta-1 chain (447 aa).

The GTP site is built by Gln11, Glu69, Ser138, Gly142, Thr143, Gly144, Asn204, and Asn226. Glu69 contacts Mg(2+). Residues 427 to 447 (EATADEDAEFEEEQEAEVEEN) form a disordered region. A compositionally biased stretch (acidic residues) spans 429–447 (TADEDAEFEEEQEAEVEEN).

This sequence belongs to the tubulin family. Dimer of alpha and beta chains. A typical microtubule is a hollow water-filled tube with an outer diameter of 25 nm and an inner diameter of 15 nM. Alpha-beta heterodimers associate head-to-tail to form protofilaments running lengthwise along the microtubule wall with the beta-tubulin subunit facing the microtubule plus end conferring a structural polarity. Microtubules usually have 13 protofilaments but different protofilament numbers can be found in some organisms and specialized cells. The cofactor is Mg(2+).

The protein resides in the cytoplasm. It localises to the cytoskeleton. Tubulin is the major constituent of microtubules, a cylinder consisting of laterally associated linear protofilaments composed of alpha- and beta-tubulin heterodimers. Microtubules grow by the addition of GTP-tubulin dimers to the microtubule end, where a stabilizing cap forms. Below the cap, tubulin dimers are in GDP-bound state, owing to GTPase activity of alpha-tubulin. In Glossina morsitans morsitans (Savannah tsetse fly), this protein is Tubulin beta-1 chain.